The following is a 1138-amino-acid chain: MVWRVPPFLLPILFLASHVGAAVDLTLLANLRLTDPQRFFLTCVSGEAGAGRGSDAWGPPLLLEKDDRIVRTPPGPPLRLARNGSHQVTLRGFSKPSDLVGVFSCVGGAGARRTRVIYVHNSPGAHLLPDKVTHTVNKGDTAVLSARVHKEKQTDVIWKSNGSYFYTLDWHEAQDGRFLLQLPNVQPPSSGIYSATYLEASPLGSAFFRLIVRGCGAGRWGPGCTKECPGCLHGGVCHDHDGECVCPPGFTGTRCEQACREGRFGQSCQEQCPGISGCRGLTFCLPDPYGCSCGSGWRGSQCQEACAPGHFGADCRLQCQCQNGGTCDRFSGCVCPSGWHGVHCEKSDRIPQILNMASELEFNLETMPRINCAAAGNPFPVRGSIELRKPDGTVLLSTKAIVEPEKTTAEFEVPRLVLADSGFWECRVSTSGGQDSRRFKVNVKVPPVPLAAPRLLTKQSRQLVVSPLVSFSGDGPISTVRLHYRPQDSTMDWSTIVVDPSENVTLMNLRPKTGYSVRVQLSRPGEGGEGAWGPPTLMTTDCPEPLLQPWLEGWHVEGTDRLRVSWSLPLVPGPLVGDGFLLRLWDGTRGQERRENVSSPQARTALLTGLTPGTHYQLDVQLYHCTLLGPASPPAHVLLPPSGPPAPRHLHAQALSDSEIQLTWKHPEALPGPISKYVVEVQVAGGAGDPLWIDVDRPEETSTIIRGLNASTRYLFRMRASIQGLGDWSNTVEESTLGNGLQAEGPVQESRAAEEGLDQQLILAVVGSVSATCLTILAALLTLVCIRRSCLHRRRTFTYQSGSGEETILQFSSGTLTLTRRPKLQPEPLSYPVLEWEDITFEDLIGEGNFGQVIRAMIKKDGLKMNAAIKMLKEYASENDHRDFAGELEVLCKLGHHPNIINLLGACKNRGYLYIAIEYAPYGNLLDFLRKSRVLETDPAFAREHGTASTLSSRQLLRFASDAANGMQYLSEKQFIHRDLAARNVLVGENLASKIADFGLSRGEEVYVKKTMGRLPVRWMAIESLNYSVYTTKSDVWSFGVLLWEIVSLGGTPYCGMTCAELYEKLPQGYRMEQPRNCDDEVYELMRQCWRDRPYERPPFAQIALQLGRMLEARKAYVNMSLFENFTYAGIDATAEEA.

A signal peptide spans 1 to 21 (MVWRVPPFLLPILFLASHVGA). The Extracellular portion of the chain corresponds to 22-759 (AVDLTLLANL…SRAAEEGLDQ (738 aa)). Residues 43 to 105 (CVSGEAGAGR…PSDLVGVFSC (63 aa)) enclose the Ig-like C2-type 1 domain. N-linked (GlcNAc...) asparagine glycosylation is found at N83 and N161. 3 consecutive EGF-like domains span residues 214–256 (GCGA…TRCE), 258–303 (ACRE…SQCQ), and 305–345 (ACAP…VHCE). Cystine bridges form between C228–C237, C231–C244, and C246–C255. Cystine bridges form between C315–C327, C321–C333, and C335–C344. The region spanning 372-426 (CAAAGNPFPVRGSIELRKPDGTVLLSTKAIVEPEKTTAEFEVPRLVLADSGFWEC) is the Ig-like C2-type 2 domain. Fibronectin type-III domains follow at residues 446–545 (PPVP…CPEP), 548–642 (QPWL…LPPS), and 646–739 (APRH…TLGN). 3 N-linked (GlcNAc...) asparagine glycosylation sites follow: N503, N596, and N709. A helical transmembrane segment spans residues 760-784 (QLILAVVGSVSATCLTILAALLTLV). Topologically, residues 785–1138 (CIRRSCLHRR…AGIDATAEEA (354 aa)) are cytoplasmic. One can recognise a Protein kinase domain in the interval 839 to 1118 (ITFEDLIGEG…RMLEARKAYV (280 aa)). Residues 845 to 853 (IGEGNFGQV) and K870 each bind ATP. The active-site Proton acceptor is D979. Phosphotyrosine; by autocatalysis is present on Y1007.

Belongs to the protein kinase superfamily. Tyr protein kinase family. Tie subfamily. As to quaternary structure, heterodimer with TEK/TIE2. Interacts with SVEP1 (via C-terminus). Post-translationally, phosphorylated on tyrosine residues in response to ANGPT1, most likely by TEK/TIE2. As to expression, specifically expressed in developing vascular endothelial cells.

It localises to the cell membrane. The enzyme catalyses L-tyrosyl-[protein] + ATP = O-phospho-L-tyrosyl-[protein] + ADP + H(+). In terms of biological role, transmembrane tyrosine-protein kinase that may modulate TEK/TIE2 activity and contribute to the regulation of angiogenesis. This is Tyrosine-protein kinase receptor Tie-1 (TIE1) from Homo sapiens (Human).